Reading from the N-terminus, the 121-residue chain is Large ribosomal subunit protein uL14 (121 aa).

It belongs to the universal ribosomal protein uL14 family. Part of the 50S ribosomal subunit. Forms a cluster with proteins L3 and L19. In the 70S ribosome, L14 and L19 interact and together make contacts with the 16S rRNA in bridges B5 and B8.

In terms of biological role, binds to 23S rRNA. Forms part of two intersubunit bridges in the 70S ribosome. The protein is Large ribosomal subunit protein uL14 of Synechococcus sp. (strain CC9311).